A 409-amino-acid chain; its full sequence is Lissencephaly-1 homolog (409 aa).

In terms of domain architecture, LisH spans 7 to 39 (QEEELRFAVADYLQSCGYTNALEAFKKDASIPK). The stretch at 56–81 (SVVRLQKKVMDLELRLNNTTREMNSG) forms a coiled coil. Polar residues predominate over residues 75-92 (TREMNSGVPTRNSRSSND). Residues 75-105 (TREMNSGVPTRNSRSSNDWIPRPPEKHSLSG) are disordered. WD repeat units follow at residues 105–146 (GHRS…RTLR), 147–186 (GHTD…CRMT), 189–228 (GHDH…CVYN), 231–270 (GHRE…CKEE), 273–332 (GHEH…CLFS), 335–374 (GHDN…CSKS), and 377–409 (AHNH…WECR).

Belongs to the WD repeat LIS1/nudF family.

Its subcellular location is the cytoplasm. It localises to the cytoskeleton. The protein resides in the microtubule organizing center. The protein localises to the centrosome. In terms of biological role, positively regulates the activity of the minus-end directed microtubule motor protein dynein. May enhance dynein-mediated microtubule sliding by targeting dynein to the microtubule plus end. Required for several dynein- and microtubule-dependent processes. This Trichoplax adhaerens (Trichoplax reptans) protein is Lissencephaly-1 homolog.